Here is a 72-residue protein sequence, read N- to C-terminus: Small ribosomal subunit protein bS18 (72 aa).

Belongs to the bacterial ribosomal protein bS18 family. Part of the 30S ribosomal subunit. Forms a tight heterodimer with protein bS6.

Binds as a heterodimer with protein bS6 to the central domain of the 16S rRNA, where it helps stabilize the platform of the 30S subunit. The protein is Small ribosomal subunit protein bS18 of Francisella philomiragia subsp. philomiragia (strain ATCC 25017 / CCUG 19701 / FSC 153 / O#319-036).